The primary structure comprises 412 residues: MKVRIRGIYATALTKLFLDNGFEIVQATPQISDRFSLPIRAEPSDVTIKDGNDKGELISIGEDIYSFLRKTFQNSFIWKSPVRLYSVIETNNCKFMDYQVEPCLDKGLVVKPPSEGRIILSSPKAVGKYSMVWRGDGKTFFSEHIRDREEKTRLLSISIPFNKKGYNVKWRSNAPFASNIVLKEELEKLAIRFDNNDFRQQGEDFIKVTVSLEDKIMLDEIRKKVLPNTIRFHHMLKMSFSNEVDEIEQTSMNNEELLDKLITDYMGIEHIKPDGRKFELKEGKVIYKEVNSDYYIVRLMRVFSREGIYDGLNVKKEEGDYDIVEFDSRKWYQIHRYYNKDGKLKGIYVNISTPPELLRGKLRYLDLEVDVVKVGDEVRIIDLEELEKNKEIIGETMYKKIFTIIEEVKKIL.

It belongs to the FAU-1 family.

In terms of biological role, probable RNase involved in rRNA stability through maturation and/or degradation of precursor rRNAs. Binds to RNA in loop regions with AU-rich sequences. In Sulfurisphaera tokodaii (strain DSM 16993 / JCM 10545 / NBRC 100140 / 7) (Sulfolobus tokodaii), this protein is Probable ribonuclease FAU-1.